The primary structure comprises 116 residues: Ly-6/neurotoxin-like protein 1 (116 aa).

Positions 1 to 20 (MTPLLTLILVVLMGLPLAQA) are cleaved as a signal peptide. A UPAR/Ly6 domain is found at 21 to 105 (LDCHVCAYNG…LATPATLALA (85 aa)). Disulfide bonds link Cys23–Cys46, Cys26–Cys33, Cys39–Cys64, Cys68–Cys85, and Cys86–Cys91. The GPI-anchor amidated asparagine moiety is linked to residue Asn92. The propeptide at 93-116 (GAGLATPATLALAPILLATLWGLL) is removed in mature form.

Interacts with nAChRs containing alpha-4:beta-2 (CHRNA4:CHRNB2) and alpha-7 (CHRNA7) subunits. Interacts with CHRNA4 probably in the endoplasmic reticulum prior to nAChR pentameric assembly. Interacts with KCNA2/Potassium voltage-gated channel subfamily A member 2.

It localises to the cell membrane. It is found in the cell projection. The protein localises to the dendrite. Its subcellular location is the endoplasmic reticulum. In terms of biological role, acts in different tissues through interaction to nicotinic acetylcholine receptors (nAChRs). The proposed role as modulator of nAChR activity seems to be dependent on the nAChR subtype and stoichiometry, and to involve an effect on nAChR trafficking and its cell surface expression, and on single channel properties of the nAChR inserted in the plasma membrane. Modulates functional properties of nicotinic acetylcholine receptors (nAChRs) to prevent excessive excitation, and hence neurodegeneration. Enhances desensitization by increasing both the rate and extent of desensitization of alpha-4:beta-2-containing nAChRs and slowing recovery from desensitization. Promotes large amplitude ACh-evoked currents through alpha-4:beta-2 nAChRs. Is involved in regulation of the nAChR pentameric assembly in the endoplasmic reticulum. Shifts stoichiometry from high sensitivity alpha-4(2):beta-2(3) to low sensitivity alpha-4(3):beta-2(2) nAChR. In vitro modulates alpha-3:beta-4-containing nAChRs. Reduces cell surface expression of (alpha-3:beta-4)(2):beta-4 and (alpha-3:beta-4)(2):alpha-5 nAChRs suggesting an interaction with nAChR alpha-3(-):(+)beta-4 subunit interfaces and an allosteric mode. Corresponding single channel effects characterized by decreased unitary conductance, altered burst proportions and enhanced desensitization/inactivation seem to depend on nAChR alpha:alpha subunit interfaces and are greater in (alpha-3:beta-2)(2):alpha-3 when compared to (alpha-3:beta-2)(2):alpha-5 nAChRs. Prevents plasticity in the primary visual cortex late in life. The protein is Ly-6/neurotoxin-like protein 1 of Pan troglodytes (Chimpanzee).